A 255-amino-acid polypeptide reads, in one-letter code: Pimeloyl-[acyl-carrier protein] methyl ester esterase (255 aa).

Residues W18, 78 to 79 (SL), and 139 to 143 (FLALD) contribute to the substrate site. Residue S78 is the Nucleophile of the active site. Residues D203 and H233 contribute to the active site. H233 lines the substrate pocket.

It belongs to the AB hydrolase superfamily. Carboxylesterase BioH family. Monomer.

The protein localises to the cytoplasm. The enzyme catalyses 6-carboxyhexanoyl-[ACP] methyl ester + H2O = 6-carboxyhexanoyl-[ACP] + methanol + H(+). The protein operates within cofactor biosynthesis; biotin biosynthesis. Its function is as follows. The physiological role of BioH is to remove the methyl group introduced by BioC when the pimeloyl moiety is complete. It allows to synthesize pimeloyl-ACP via the fatty acid synthetic pathway through the hydrolysis of the ester bonds of pimeloyl-ACP esters. This chain is Pimeloyl-[acyl-carrier protein] methyl ester esterase, found in Xylella fastidiosa (strain M23).